The sequence spans 735 residues: Probable ATP-dependent RNA helicase DHR2 (735 aa).

The span at 1 to 13 (MAANSNSRVASNH) shows a compositional bias: polar residues. The interval 1–29 (MAANSNSRVASNHTSKKQKVRRNIHPFTN) is disordered. The span at 14 to 24 (TSKKQKVRRNI) shows a compositional bias: basic residues. The Helicase ATP-binding domain occupies 91 to 257 (MSYIESNPVT…FNNAPILFVE (167 aa)). 104–111 (GETGSGKS) provides a ligand contact to ATP. Positions 203–206 (DEAH) match the DEAH box motif. The Helicase C-terminal domain maps to 262–456 (DVKQYYLKAP…SPVLMLKRYG (195 aa)).

It belongs to the DEAD box helicase family. DEAH subfamily. As to quaternary structure, interacts with NOP19. Interacts with UBP10.

It is found in the nucleus. The protein localises to the nucleolus. It catalyses the reaction ATP + H2O = ADP + phosphate + H(+). Probable ATP-binding RNA helicase. Required for 18S rRNA synthesis. In Saccharomyces cerevisiae (strain ATCC 204508 / S288c) (Baker's yeast), this protein is Probable ATP-dependent RNA helicase DHR2 (DHR2).